The following is a 249-amino-acid chain: Probable aquaporin TIP-type (249 aa).

2 helical membrane passes run 22–42 (AGLA…GSGI) and 56–76 (AGLI…VSVG). The NPA 1 signature appears at 85-87 (NPA). A run of 3 helical transmembrane segments spans residues 103 to 123 (IVYI…LVFV), 137 to 157 (VGVG…VYTV), and 169 to 189 (IGII…LVGG). Residues 197-199 (NPA) carry the NPA 2 motif. Residues 217 to 237 (YWAGPLIGGGIAGLVYEVLFI) traverse the membrane as a helical segment.

The protein belongs to the MIP/aquaporin (TC 1.A.8) family. TIP (TC 1.A.8.10) subfamily. As to expression, expression is highest in root tips, with slightly lower levels of hybridizing mRNA in stems, and whole roots, and much lower levels in nodules and leaves.

Its subcellular location is the membrane. Aquaporins facilitate the transport of water and small neutral solutes across cell membranes. This is Probable aquaporin TIP-type (MCP1) from Medicago sativa (Alfalfa).